The following is a 575-amino-acid chain: Septation ring formation regulator EzrA (575 aa).

At 1–8 the chain is on the extracellular side; that stretch reads MSNGQLIY. Residues 9 to 27 traverse the membrane as a helical segment; the sequence is LMVAIAVILVLAYVVAIFL. Over 28–575 the chain is Cytoplasmic; sequence RKRNEGRLEA…YEKTRETIRF (548 aa). Coiled coils occupy residues 105 to 191, 265 to 301, 354 to 416, and 456 to 526; these read LKAS…FVTL, LYEA…LYDI, VRRI…IEKD, and TASN…IQEA.

Belongs to the EzrA family.

It is found in the cell membrane. Its function is as follows. Negative regulator of FtsZ ring formation; modulates the frequency and position of FtsZ ring formation. Inhibits FtsZ ring formation at polar sites. Interacts either with FtsZ or with one of its binding partners to promote depolymerization. This Streptococcus pneumoniae serotype 4 (strain ATCC BAA-334 / TIGR4) protein is Septation ring formation regulator EzrA.